The chain runs to 539 residues: MADTKYIFVTGGVVSSLGKGIVAASLGKLLQARGFNVALQKFDPYINIDPGTLNPYEHGECYVTEDGHEADLDLGHYERFLNTPTTRANNITTGRIYQNVIRKERKGEYLGKTVQVVPHITDEIKRNVKLLGQKSQYDFVITEIGGTVGDIESLPFLESVRQLKWELGQNCLCVHLTYVPYIAAAGEVKTKPTQHSVKQLQEVGIQPDILVLRTEHELQPDILKKVALFCNVAPDSVVQSVDVPTIYEVPLVLQQQHMDETVLRKVGLQVGPVPEMRQWHEFLEMKHTAQETVTIALVGKYVELQDAYKSIDESLMQAAIYNRKKLNLISVHSEKVTEANVAETLKDMDGIVIAPGFGSRGVEGKLVALKYARENDLPTLGICLGMQCMVIEYARNVLGFKDANTTEIESNIEHKVIDLMDEQKTVTDMGGSMRLGAYDCALRKGSKLAAAYGKEFVRERHRHRFEFNSQYREAFEKAGMQCVGENPETGLVEAVEVPACRWFVGVQFHPEYNSTVVNPNPLFMAFIREAIKTRKKDKE.

Residues 1–268 (MADTKYIFVT…DETVLRKVGL (268 aa)) are amidoligase domain. Serine 15 contacts CTP. A UTP-binding site is contributed by serine 15. 16–21 (SLGKGI) is a binding site for ATP. Tyrosine 56 is a binding site for L-glutamine. An ATP-binding site is contributed by aspartate 73. The Mg(2+) site is built by aspartate 73 and glutamate 143. CTP contacts are provided by residues 150–152 (DIE), 189–194 (KTKPTQ), and lysine 225. UTP contacts are provided by residues 189–194 (KTKPTQ) and lysine 225. Residues 294–536 (TIALVGKYVE…IREAIKTRKK (243 aa)) form the Glutamine amidotransferase type-1 domain. Glycine 356 serves as a coordination point for L-glutamine. The Nucleophile; for glutamine hydrolysis role is filled by cysteine 383. Residues 384–387 (LGMQ), glutamate 407, and arginine 464 each bind L-glutamine. Residues histidine 509 and glutamate 511 contribute to the active site.

Belongs to the CTP synthase family. Homotetramer.

The enzyme catalyses UTP + L-glutamine + ATP + H2O = CTP + L-glutamate + ADP + phosphate + 2 H(+). It catalyses the reaction L-glutamine + H2O = L-glutamate + NH4(+). The catalysed reaction is UTP + NH4(+) + ATP = CTP + ADP + phosphate + 2 H(+). It functions in the pathway pyrimidine metabolism; CTP biosynthesis via de novo pathway; CTP from UDP: step 2/2. With respect to regulation, allosterically activated by GTP, when glutamine is the substrate; GTP has no effect on the reaction when ammonia is the substrate. The allosteric effector GTP functions by stabilizing the protein conformation that binds the tetrahedral intermediate(s) formed during glutamine hydrolysis. Inhibited by the product CTP, via allosteric rather than competitive inhibition. Functionally, catalyzes the ATP-dependent amination of UTP to CTP with either L-glutamine or ammonia as the source of nitrogen. Regulates intracellular CTP levels through interactions with the four ribonucleotide triphosphates. This Porphyromonas gingivalis (strain ATCC 33277 / DSM 20709 / CIP 103683 / JCM 12257 / NCTC 11834 / 2561) protein is CTP synthase.